The sequence spans 166 residues: Large ribosomal subunit protein uL10 (166 aa).

Belongs to the universal ribosomal protein uL10 family. In terms of assembly, part of the ribosomal stalk of the 50S ribosomal subunit. The N-terminus interacts with L11 and the large rRNA to form the base of the stalk. The C-terminus forms an elongated spine to which L12 dimers bind in a sequential fashion forming a multimeric L10(L12)X complex.

Its function is as follows. Forms part of the ribosomal stalk, playing a central role in the interaction of the ribosome with GTP-bound translation factors. This chain is Large ribosomal subunit protein uL10, found in Marinomonas sp. (strain MWYL1).